A 1549-amino-acid chain; its full sequence is ATP-binding cassette sub-family C member 9 (1549 aa).

Residues 1 to 30 lie on the Extracellular side of the membrane; sequence MSLSFCGNNISSYNINDGVLQNSCFVDALN. N-linked (GlcNAc...) asparagine glycosylation is present at Asn9. The helical transmembrane segment at 31-51 threads the bilayer; the sequence is LVPHVFLLFITFPILFIGWGS. The Cytoplasmic segment spans residues 52-72; sequence QSSKVQIHHNTWLHFPGHNLR. The helical transmembrane segment at 73–93 threads the bilayer; it reads WILTFALLFVHVCEIAEGIVS. Residues 94-101 lie on the Extracellular side of the membrane; sequence DSRRESRH. The helical transmembrane segment at 102–122 threads the bilayer; sequence LHLFMPAVMGFVATTTSIVYY. At 123–132 the chain is on the cytoplasmic side; it reads HNIETSNFPK. Residues 133–153 form a helical membrane-spanning segment; sequence LLLALFLYWVMAFITKTIKLV. At 154–167 the chain is on the extracellular side; that stretch reads KYCQSGLDISNLRF. A helical membrane pass occupies residues 168–188; that stretch reads CITGMMVILNGLLMAVEINVI. Topologically, residues 189-301 are cytoplasmic; that stretch reads RVRRYVFFMN…AFGRPILLSS (113 aa). Residues 297–597 form the ABC transmembrane type-1 1 domain; sequence ILLSSTFRYL…LSTVVRFAVK (301 aa). A helical transmembrane segment spans residues 302–322; that stretch reads TFRYLADLLGFAGPLCISGIV. The Extracellular portion of the chain corresponds to 323 to 350; that stretch reads QRVNETQNGTNNTTGISETLSSKEFLEN. N-linked (GlcNAc...) asparagine glycosylation is found at Asn326, Asn330, Asn333, and Asn334. The helical transmembrane segment at 351–371 threads the bilayer; the sequence is AYVLAVLLFLALILQRTFLQA. The Cytoplasmic portion of the chain corresponds to 372–423; that stretch reads SYYVTIETGINLRGALLAMIYNKILRLSTSNLSMGEMTLGQINNLVAIETNQ. A helical membrane pass occupies residues 424–444; the sequence is LMWFLFLCPNLWAMPVQIIMG. The Extracellular segment spans residues 445 to 455; the sequence is VILLYNLLGSS. Residues 456 to 476 traverse the membrane as a helical segment; the sequence is ALVGAAVIVLLAPIQYFIATK. The Cytoplasmic portion of the chain corresponds to 477 to 531; the sequence is LAEAQKSTLDYSTERLKKTNEILKGIKLLKLYAWEHIFCKSVEETRMKELSSLKT. A helical transmembrane segment spans residues 532-552; it reads FALYTSLSIFMNAAIPIAAVL. Residues 553–571 lie on the Extracellular side of the membrane; it reads ATFVTHAYASGNNLKPAEA. The helical transmembrane segment at 572–592 threads the bilayer; the sequence is FASLSLFHILVTPLFLLSTVV. Topologically, residues 593–990 are cytoplasmic; it reads RFAVKAIISV…TCWRYLTSGG (398 aa). The ABC transporter 1 domain maps to 672-912; that stretch reads IKVTNGYFSW…DVELYEHWKT (241 aa). 705-712 is an ATP binding site; it reads GQVGCGKS. Residues 944-967 form a disordered region; the sequence is REAKAQMEDEDEEEEEEEDEDDNM. Positions 951 to 966 are enriched in acidic residues; it reads EDEDEEEEEEEDEDDN. A helical transmembrane segment spans residues 991–1011; sequence FFLLILMIFSKLLKHSVIVAI. Positions 994–1274 constitute an ABC transmembrane type-1 2 domain; sequence LILMIFSKLL…VVRNLADLEV (281 aa). The Extracellular portion of the chain corresponds to 1012-1034; sequence DYWLATWTSEYSINNTGKADQTY. A helical transmembrane segment spans residues 1035 to 1055; the sequence is YVAGFSILCGAGIFLCLVTSL. Over 1056–1127 the chain is Cytoplasmic; it reads TVEWMGLTAA…TLLCLSAIGM (72 aa). Residues 1128-1148 form a helical membrane-spanning segment; sequence ISYATPVFLVALLPLGVAFYF. Residues 1149 to 1245 are Extracellular-facing; sequence IQKYFRVASK…IASISGSSNS (97 aa). Residues 1246 to 1266 form a helical membrane-spanning segment; sequence GLVGLGLLYALTITNYLNWVV. Residues 1267–1549 lie on the Cytoplasmic side of the membrane; it reads RNLADLEVQM…LFSTLVMTNK (283 aa). The ABC transporter 2 domain maps to 1312-1546; it reads IKIHDLCVRY…KNGLFSTLVM (235 aa). 1346-1353 provides a ligand contact to ATP; sequence GRTGSGKS.

This sequence belongs to the ABC transporter superfamily. ABCC family. Conjugate transporter (TC 3.A.1.208) subfamily. As to quaternary structure, interacts with KCNJ11. Interacts with KCNJ8.

Its subcellular location is the membrane. Its function is as follows. Subunit of ATP-sensitive potassium channels (KATP). Can form cardiac and smooth muscle-type KATP channels with KCNJ11. KCNJ11 forms the channel pore while ABCC9 is required for activation and regulation. Can form a sulfonylurea-sensitive but ATP-insensitive potassium channel with KCNJ8. The chain is ATP-binding cassette sub-family C member 9 (ABCC9) from Homo sapiens (Human).